Consider the following 621-residue polypeptide: Chaperone protein HscA homolog (621 aa).

The protein belongs to the heat shock protein 70 family.

In terms of biological role, chaperone involved in the maturation of iron-sulfur cluster-containing proteins. Has a low intrinsic ATPase activity which is markedly stimulated by HscB. The polypeptide is Chaperone protein HscA homolog (Azotobacter vinelandii (strain DJ / ATCC BAA-1303)).